The chain runs to 489 residues: Cysteine--tRNA ligase (489 aa).

Cys29 is a Zn(2+) binding site. The 'HIGH' region signature appears at 31–41 (ITSYDYCHIGH). Zn(2+)-binding residues include Cys209, His234, and Glu238. The short motif at 266-270 (KMSKS) is the 'KMSKS' region element. Lys269 lines the ATP pocket.

This sequence belongs to the class-I aminoacyl-tRNA synthetase family. Monomer. Requires Zn(2+) as cofactor.

It localises to the cytoplasm. The catalysed reaction is tRNA(Cys) + L-cysteine + ATP = L-cysteinyl-tRNA(Cys) + AMP + diphosphate. The polypeptide is Cysteine--tRNA ligase (Desulfotalea psychrophila (strain LSv54 / DSM 12343)).